The primary structure comprises 444 residues: MKSEIIESLKSKLNRRVWESWFGTFDVKEIGPDYVVFQVGNLFIREWLEKKYGSLISKTLRELFGKPMDFRIEHASAKTEEKLDSNEDEPLVKKRPLILTPLNPILTFENFVVGPNNMFAYSTCLEVAKNPGKYNPLFLHGGVGLGKTHLLQAIGHYLFKHEPDMRVIYLTSERFLNELVDSIKKNRVQEFRDKFRNKIDVLLLDDVQFLIGKTGIQTELFHTFNELYNEGKQIVVCSDRDPQQLEKFQDRLVSRFQMGVVTKIEKPDEETCFKIAQKMAQLENAELQEDILKLISKNFSDNLRRLRGALVKLIMYQQISGEKVDLQKAFELLAIQNSYHNKSLPEEKLMNSICEIFGVSQEEILSKSRKKEVALARQIGMYVARNYMGFSLRKVADMFKRSHPTVSHTIQKLEELTNSGNMVIKSQIDRLARCVTGQILDQSV.

Residues 1–66 (MKSEIIESLK…SKTLRELFGK (66 aa)) form a domain I, interacts with DnaA modulators region. Residues 66–100 (KPMDFRIEHASAKTEEKLDSNEDEPLVKKRPLILT) form a domain II region. A domain III, AAA+ region region spans residues 101-317 (PLNPILTFEN…GALVKLIMYQ (217 aa)). Gly144, Gly146, Lys147, and Thr148 together coordinate ATP. The domain IV, binds dsDNA stretch occupies residues 318–444 (QISGEKVDLQ…VTGQILDQSV (127 aa)).

The protein belongs to the DnaA family. Oligomerizes as a right-handed, spiral filament on DNA at oriC.

The protein resides in the cytoplasm. Plays an essential role in the initiation and regulation of chromosomal replication. ATP-DnaA binds to the origin of replication (oriC) to initiate formation of the DNA replication initiation complex once per cell cycle. Binds the DnaA box (a 9 base pair repeat at the origin) and separates the double-stranded (ds)DNA. Forms a right-handed helical filament on oriC DNA; dsDNA binds to the exterior of the filament while single-stranded (ss)DNA is stabiized in the filament's interior. The ATP-DnaA-oriC complex binds and stabilizes one strand of the AT-rich DNA unwinding element (DUE), permitting loading of DNA polymerase. After initiation quickly degrades to an ADP-DnaA complex that is not apt for DNA replication. Binds acidic phospholipids. The protein is Chromosomal replication initiator protein DnaA of Pseudothermotoga lettingae (strain ATCC BAA-301 / DSM 14385 / NBRC 107922 / TMO) (Thermotoga lettingae).